The sequence spans 733 residues: Serine/threonine-protein kinase ATG1c (733 aa).

Residues 12 to 269 (YLVGRQIGSG…FEEFFNHPFL (258 aa)) form the Protein kinase domain. Residues 18–26 (IGSGSFSVV) and Lys41 each bind ATP. The Proton acceptor role is filled by Asp134. Disordered stretches follow at residues 292-363 (SSGS…ELTS) and 379-414 (FETQINSDRRNRREPTGLTDSRSLIAPGRVDDSQDS). Residues 329–339 (KKTSSMKSSSG) are compositionally biased toward polar residues. Composition is skewed to basic and acidic residues over residues 342–360 (VDTRIERKEVESSPLKHTE) and 379–393 (FETQINSDRRNRREP). Positions 419-422 (FVLV) match the AIM (Atg8-family-interacting motif) motif. 2 disordered regions span residues 565 to 596 (GSPSQDINKLRSSSLKHDTHSSNKVTDLSHDG) and 713 to 733 (HRRSSAGQMQGSSLAMMNRQS). The segment covering 566–577 (SPSQDINKLRSS) has biased composition (polar residues). A compositionally biased stretch (basic and acidic residues) spans 579–596 (LKHDTHSSNKVTDLSHDG). Positions 717-733 (SAGQMQGSSLAMMNRQS) are enriched in polar residues.

It belongs to the protein kinase superfamily. Ser/Thr protein kinase family.

The protein localises to the cytoplasmic vesicle. The protein resides in the autophagosome. Functionally, serine/threonine protein kinase involved in autophagy. The ATG1-ATG13 protein kinase complex regulates downstream events required for autophagosome enclosure and/or vacuolar delivery. The sequence is that of Serine/threonine-protein kinase ATG1c from Arabidopsis thaliana (Mouse-ear cress).